The sequence spans 213 residues: Lysozyme g-like protein 2 (213 aa).

Residues 1–19 (MVPSVVFWGLIALVGTAKG) form the signal peptide. 2 cysteine pairs are disulfide-bonded: Cys-40/Cys-93 and Cys-54/Cys-62. The active site involves Glu-106.

The protein belongs to the glycosyl hydrolase 23 family.

Its subcellular location is the secreted. May act as a potent antibacterial protein that may play a role in the innate immunity. This Mus musculus (Mouse) protein is Lysozyme g-like protein 2 (Lyg2).